We begin with the raw amino-acid sequence, 351 residues long: 1-acylglycerol-3-phosphate O-acyltransferase ABHD5 (351 aa).

In terms of domain architecture, AB hydrolase-1 spans 79–184 (PLVLLHGFGG…LILVEPWGFP (106 aa)). The residue at position 124 (serine 124) is a Phosphoserine. Residues 329 to 334 (HYVYAD) carry the HXXXXD motif motif.

The protein belongs to the peptidase S33 family. ABHD4/ABHD5 subfamily. As to quaternary structure, interacts with ADRP. Interacts with PLIN. Interacts with and PNPLA2. Interacts with PLIN5; promotes interaction with PNPLA2. In terms of tissue distribution, highly expressed in the adipose tissue and testes. Weakly expressed in the liver, muscle, kidney, and heart. Expressed by upper epidermal layers and dermal fibroblasts in skin, hepatocytes and hypothalamus in brain (at protein level).

Its subcellular location is the cytoplasm. The protein localises to the lipid droplet. It localises to the cytosol. The enzyme catalyses a 1-acyl-sn-glycero-3-phosphate + an acyl-CoA = a 1,2-diacyl-sn-glycero-3-phosphate + CoA. It carries out the reaction 1-(9Z-octadecenoyl)-sn-glycero-3-phosphate + (9Z)-octadecenoyl-CoA = 1,2-di-(9Z-octadecenoyl)-sn-glycero-3-phosphate + CoA. It catalyses the reaction 1-(9Z-octadecenoyl)-sn-glycero-3-phosphate + hexadecanoyl-CoA = 1-(9Z)-octadecenoyl-2-hexadecanoyl-sn-glycero-3-phosphate + CoA. The catalysed reaction is 1-(9Z-octadecenoyl)-sn-glycero-3-phosphate + octadecanoyl-CoA = 1-(9Z-octadecenoyl)-2-octadecanoyl-sn-glycero-3-phosphate + CoA. The enzyme catalyses 1-(9Z-octadecenoyl)-sn-glycero-3-phosphate + (5Z,8Z,11Z,14Z)-eicosatetraenoyl-CoA = 1-(9Z)-octadecenoyl-2-(5Z,8Z,11Z,14Z)-eicosatetraenoyl-sn-glycero-3-phosphate + CoA. It carries out the reaction eicosanoyl-CoA + 1-(9Z-octadecenoyl)-sn-glycero-3-phosphate = 1-(9Z)-octadecenoyl-2-eicosanoyl-sn-glycero-3-phosphate + CoA. It catalyses the reaction 1-hexadecanoyl-sn-glycero-3-phosphate + (9Z)-octadecenoyl-CoA = 1-hexadecanoyl-2-(9Z-octadecenoyl)-sn-glycero-3-phosphate + CoA. The catalysed reaction is 1-octadecanoyl-sn-glycero-3-phosphate + (9Z)-octadecenoyl-CoA = 1-octadecanoyl-2-(9Z-octadecenoyl)-sn-glycero-3-phosphate + CoA. The enzyme catalyses 1-(5Z,8Z,11Z,14Z-eicosatetraenoyl)-sn-glycero-3-phosphate + (9Z)-octadecenoyl-CoA = 1-(5Z,8Z,11Z,14Z)-eicosatetraenoyl-2-(9Z)-octadecenoyl-sn-glycero-3-phosphate + CoA. Acyltransferase activity is inhibited by detergents such as Triton X-100 and 3-[(3-cholamidopropyl)dimethylammonio]-1-propanesulfonate (CHAPS). Acyltransferase activity is inhibited by the presence of magnesium and calcium. Its function is as follows. Coenzyme A-dependent lysophosphatidic acid acyltransferase that catalyzes the transfer of an acyl group on a lysophosphatidic acid. Functions preferentially with 1-oleoyl-lysophosphatidic acid followed by 1-palmitoyl-lysophosphatidic acid, 1-stearoyl-lysophosphatidic acid and 1-arachidonoyl-lysophosphatidic acid as lipid acceptor. Functions preferentially with arachidonoyl-CoA followed by oleoyl-CoA as acyl group donors. Functions in phosphatidic acid biosynthesis. May regulate the cellular storage of triacylglycerol through activation of the phospholipase PNPLA2. Involved in keratinocyte differentiation. Regulates lipid droplet fusion. The sequence is that of 1-acylglycerol-3-phosphate O-acyltransferase ABHD5 from Mus musculus (Mouse).